The following is a 473-amino-acid chain: Inactive FRIGIDA-like protein 2 (473 aa).

Coiled-coil stretches lie at residues 3–35 and 306–361; these read AAES…RSLL and SLKV…RATK. The interval 356–384 is disordered; it reads RKRATKFNSPANPQQPQEQKVDNKRPRVA. A compositionally biased stretch (polar residues) spans 361–373; the sequence is KFNSPANPQQPQE.

Belongs to the Frigida family. In terms of tissue distribution, expressed at low levels throughout the plant, with slightly higher expression in developing seeds and the highest expression in pollen.

Inactive FRIGIDA-like 2 protein. This chain is Inactive FRIGIDA-like protein 2 (FRL2), found in Arabidopsis thaliana (Mouse-ear cress).